Consider the following 489-residue polypeptide: Betaine aldehyde dehydrogenase (489 aa).

K(+) contacts are provided by threonine 26 and aspartate 93. 150 to 152 contacts NAD(+); sequence GAW. Lysine 162 functions as the Charge relay system in the catalytic mechanism. NAD(+) is bound at residue 176–179; the sequence is KPSE. A K(+)-binding site is contributed by valine 180. 229–232 contacts NAD(+); that stretch reads GVET. Leucine 245 contributes to the K(+) binding site. Glutamate 251 acts as the Proton acceptor in catalysis. Glycine 253, cysteine 285, and glutamate 386 together coordinate NAD(+). Cysteine 285 serves as the catalytic Nucleophile. At cysteine 285 the chain carries Cysteine sulfenic acid (-SOH). K(+) contacts are provided by lysine 456 and glycine 459. The Charge relay system role is filled by glutamate 463.

The protein belongs to the aldehyde dehydrogenase family. In terms of assembly, dimer of dimers. The cofactor is K(+).

It carries out the reaction betaine aldehyde + NAD(+) + H2O = glycine betaine + NADH + 2 H(+). It participates in amine and polyamine biosynthesis; betaine biosynthesis via choline pathway; betaine from betaine aldehyde: step 1/1. Involved in the biosynthesis of the osmoprotectant glycine betaine. Catalyzes the irreversible oxidation of betaine aldehyde to the corresponding acid. The protein is Betaine aldehyde dehydrogenase of Burkholderia pseudomallei (strain 1106a).